Reading from the N-terminus, the 245-residue chain is U21-ctenitoxin-Pn1a (245 aa).

Residues 1 to 245 (IVYGTVTTPG…FRSWMDKVMT (245 aa)) form the Peptidase S1 domain. C30 and C46 form a disulfide bridge. Catalysis depends on charge relay system residues H45 and D95. Disulfide bonds link C161–C183 and C192–C221. S196 serves as the catalytic Charge relay system.

Expressed by the venom gland.

It localises to the secreted. Its function is as follows. Protease. Hydrolyzes gelatin and succinyl casein. The polypeptide is U21-ctenitoxin-Pn1a (Phoneutria nigriventer (Brazilian armed spider)).